A 110-amino-acid chain; its full sequence is FGSGGVFRITMQNLNDRLASYLDKVRALEQANGELEVKIRDWYQKIVLQIDNARTKFETEQALRVLDELTLARKNHEEEISALRADTERQNQEYQQLMDIKLEQEIATYR.

The tract at residues 1-8 is head; it reads FGSGGVFR. A Phosphoserine modification is found at Ser3. Residues 7–110 form the IF rod domain; that stretch reads FRITMQNLND…KLEQEIATYR (104 aa). Arg8 carries the post-translational modification Omega-N-methylarginine. The coil 1A stretch occupies residues 9 to 42; sequence ITMQNLNDRLASYLDKVRALEQANGELEVKIRDW. Residues 43-45 form a linker 1 region; that stretch reads YQK. The interval 46–83 is coil 1B; sequence IVLQIDNARTKFETEQALRVLDELTLARKNHEEEISAL. Residues 85 to 110 form a coil 2 region; the sequence is ADTERQNQEYQQLMDIKLEQEIATYR. The necessary for interaction with PNN stretch occupies residues 85-110; it reads ADTERQNQEYQQLMDIKLEQEIATYR.

The protein belongs to the intermediate filament family. As to quaternary structure, heterotetramer of two type I and two type II keratins. Interacts with PNN and the actin-binding domain of DMD.

In terms of biological role, involved in the organization of myofibers. Together with KRT8, helps to link the contractile apparatus to dystrophin at the costameres of striated muscle. The sequence is that of Keratin, type I cytoskeletal 19 from Mesocricetus auratus (Golden hamster).